The primary structure comprises 596 residues: Heat shock factor protein 5 (596 aa).

The DNA-binding element occupies 10-200; sequence NPNNFPAKLW…FHRSFRRDSL (191 aa). Residues 541–576 are disordered; that stretch reads EMGPASKPSEDTGLATPARYREHRSNSQQGKSPDLH. Residue serine 572 is modified to Phosphoserine.

It belongs to the HSF family. In terms of assembly, homooligomer.

The protein resides in the nucleus. It localises to the chromosome. Its function is as follows. DNA-binding transcription factor that is essential for male fertility, spermatogenesis and meiotic prophase progression in spermatocytes under non-stress conditions. Positvely and negatively regulates gene expression to ensure progression of meiotic prophase beyond pachytene stage in spermatocytes. Plays a role in male germline meiotic sex chromosome remodeling and silencing through regulation of SMARCA4. In Homo sapiens (Human), this protein is Heat shock factor protein 5 (HSF5).